A 27-amino-acid polypeptide reads, in one-letter code: Conotoxin flf14a (27 aa).

Disulfide bonds link Cys6–Cys26 and Cys10–Cys22.

Expressed by the venom duct.

It localises to the secreted. The protein is Conotoxin flf14a of Conus anabathrum floridanus (Florida cone).